Here is a 140-residue protein sequence, read N- to C-terminus: Nucleoside diphosphate kinase (140 aa).

The ATP site is built by lysine 10, phenylalanine 58, arginine 86, threonine 92, arginine 103, and asparagine 113. The active-site Pros-phosphohistidine intermediate is the histidine 116.

The protein belongs to the NDK family. As to quaternary structure, homotetramer. Requires Mg(2+) as cofactor.

The protein localises to the cytoplasm. It catalyses the reaction a 2'-deoxyribonucleoside 5'-diphosphate + ATP = a 2'-deoxyribonucleoside 5'-triphosphate + ADP. It carries out the reaction a ribonucleoside 5'-diphosphate + ATP = a ribonucleoside 5'-triphosphate + ADP. Its function is as follows. Major role in the synthesis of nucleoside triphosphates other than ATP. The ATP gamma phosphate is transferred to the NDP beta phosphate via a ping-pong mechanism, using a phosphorylated active-site intermediate. This Anaplasma phagocytophilum (strain HZ) protein is Nucleoside diphosphate kinase.